Reading from the N-terminus, the 150-residue chain is Large ribosomal subunit protein uL16 (150 aa).

This sequence belongs to the universal ribosomal protein uL16 family. Component of the small ribosomal subunit. Mature ribosomes consist of a small (40S) and a large (60S) subunit. The 40S subunit contains about 33 different proteins and 1 molecule of RNA (18S). The 60S subunit contains about 49 different proteins and 3 molecules of RNA (25S, 5.8S and 5S).

This Nicotiana tabacum (Common tobacco) protein is Large ribosomal subunit protein uL16 (RPL10).